The sequence spans 512 residues: GMP synthase [glutamine-hydrolyzing] (512 aa).

The 191-residue stretch at 7–197 (LVLVVDFGGQ…LFKVAGLKAD (191 aa)) folds into the Glutamine amidotransferase type-1 domain. Cysteine 84 functions as the Nucleophile in the catalytic mechanism. Catalysis depends on residues histidine 171 and glutamate 173. One can recognise a GMPS ATP-PPase domain in the interval 198 to 387 (WSMASFAEEK…LGIPHKLVWR (190 aa)). 225-231 (SGGVDSS) contacts ATP.

Homodimer.

The catalysed reaction is XMP + L-glutamine + ATP + H2O = GMP + L-glutamate + AMP + diphosphate + 2 H(+). The protein operates within purine metabolism; GMP biosynthesis; GMP from XMP (L-Gln route): step 1/1. Functionally, catalyzes the synthesis of GMP from XMP. This Clostridium novyi (strain NT) protein is GMP synthase [glutamine-hydrolyzing].